Here is a 704-residue protein sequence, read N- to C-terminus: SH3KBP1-binding protein 1 (704 aa).

Alanine 2 carries the N-acetylalanine modification. The BTB domain occupies 19-88 (EVIHLNVGGK…LRTKELDPRG (70 aa)). A disordered region spans residues 146-165 (VGPQQIGGRPAPVRRSNTMP). Position 163 is a phosphothreonine (threonine 163). WD repeat units lie at residues 233–280 (RLDW…GGSE), 283–322 (VFHLGVPVEALFFVGNQLIATSHTGRIGVWNAVTKHWQVQ), 324–359 (VQPITSYDAAGSFLLLGCSNGSIYYVDVQKFPLRMK), 428–466 (VHRSPVTKIMLSEKHLISVCADNNHVRTWSVTRFRGMIS), and 548–586 (LECEGSRRLGSRPRRYLLTGQANGSLAMWDLTTAMDGLG). The disordered stretch occupies residues 609–704 (PLTSSRASFP…PKNTLNETSF (96 aa)). Residues 611–631 (TSSRASFPSPSPRTSLTSLHS) are compositionally biased toward low complexity. A PXXXPR motif is present at residues 618–623 (PSPSPR). Serine 644 and serine 646 each carry phosphoserine. Residues 678 to 683 (PTPAPR) carry the PXXXPR motif.

It belongs to the KCTD3 family. In terms of assembly, monomer. Interacts with CUL3; interaction is direct and forms a 5:5 heterodecamer. Interacts (via PXXXPR motifs) with SH3KBP1 (via SH3 domains). Directly interacts with cathepsin B/CTSB.

Its subcellular location is the lysosome. Its function is as follows. Inhibits CBL-SH3KBP1 complex mediated down-regulation of EGFR signaling by sequestration of SH3KBP1. Binds to SH3KBP1 and prevents its interaction with CBL and inhibits translocation of SH3KBP1 to EGFR containing vesicles upon EGF stimulation. The polypeptide is SH3KBP1-binding protein 1 (Shkbp1) (Rattus norvegicus (Rat)).